Reading from the N-terminus, the 539-residue chain is MADEDGEGIHPSAPHRNGGGGGGSGLHCAGNGGGGGGGPRVVRIVKSESGYGFNVRGQVSEGGQLRSINGELYAPLQHVSAVLPGGAADRAGVRKGDRILEVNGVNVEGATHKQVVDLIRAGEKELILTVLSVPPHEADNLDPSDDSLGQSFYDYTEKQAVPISVPTYKHVEQNGEKFVVYNVYMAGRQLCSKRYREFAILHQNLKREFANFTFPRLPGKWPFSLSEQQLDARRRGLEEYLEKVCSIRVIGESDIMQEFLSESDENYNGVSDVELRVALPDGTTVTVRVKKNSTTDQVYQAIAAKVGMDSTTVNYFALFEVINHSFVRKLAPNEFPHKLYVQNYTSAVPGTCLTIRKWLFTTEEEVLLNDNDLAVTYFFHQAVDDVKKGYIKAEEKSYQLQKLHEQRKMVMYLNMLRTCEGYNEIIFPHCACDSRRKGHVITAISITHFKLHACTEEGQLENQVIAFEWDEMQRWDTDEEGMAFCFEYARGEKKPRWVKIFTPYFNYMHECFERVFCELKWRKENIFQMARSQQRDVAT.

The segment at 1-40 is disordered; the sequence is MADEDGEGIHPSAPHRNGGGGGGSGLHCAGNGGGGGGGPR. Gly residues predominate over residues 17–39; that stretch reads NGGGGGGSGLHCAGNGGGGGGGP. The 94-residue stretch at 41-134 folds into the PDZ domain; that stretch reads VVRIVKSESG…ELILTVLSVP (94 aa). 2 positions are modified to phosphoserine: Ser49 and Ser60. The 109-residue stretch at 159-267 folds into the PX domain; it reads QAVPISVPTY…EFLSESDENY (109 aa). Positions 271–360 constitute a Ras-associating domain; that stretch reads SDVELRVALP…TCLTIRKWLF (90 aa). Residues 271–360 are FERM-like region F1; the sequence is SDVELRVALP…TCLTIRKWLF (90 aa). The segment at 371-419 is FERM-like region F2; that stretch reads NDLAVTYFFHQAVDDVKKGYIKAEEKSYQLQKLHEQRKMVMYLNMLRTC. The interval 423-523 is FERM-like region F3; the sequence is NEIIFPHCAC…RVFCELKWRK (101 aa).

As to quaternary structure, core component of the SNX27-retromer, a multiprotein complex composed of SNX27, the WASH complex and the retromer complex. Interacts (via the FERM-like regions) with the WASH complex. Interacts with SNX1. Interacts with CYTIP. Interacts with DGKZ. Interacts with MCC. Interacts (via PDZ domain) with a number of target transmembrane proteins (via PDZ-binding motif): ABCC4, ADRB2, ARHGEF7, GRIA1, GRIA2, GRIN1, GRIN2A GRIN2C, KCNJ6, KCNJ9 and SLC2A1/GLUT1. Interacts (via PDZ domains) with SLC9A3; directs SLC9A3 membrane insertion from early endosomes to the plasma membrane. As to expression, expressed in cells of hematopoietic origin.

The protein resides in the early endosome membrane. Its subcellular location is the cytoplasm. The protein localises to the cytosol. Its function is as follows. Involved in the retrograde transport from endosome to plasma membrane, a trafficking pathway that promotes the recycling of internalized transmembrane proteins. Following internalization, endocytosed transmembrane proteins are delivered to early endosomes and recycled to the plasma membrane instead of being degraded in lysosomes. SNX27 specifically binds and directs sorting of a subset of transmembrane proteins containing a PDZ-binding motif at the C-terminus: following interaction with target transmembrane proteins, associates with the retromer complex, preventing entry into the lysosomal pathway, and promotes retromer-tubule based plasma membrane recycling. SNX27 also binds with the WASH complex. Interacts with membranes containing phosphatidylinositol-3-phosphate (PtdIns(3P)). May participate in establishment of natural killer cell polarity. Recruits CYTIP to early endosomes. This Mus musculus (Mouse) protein is Sorting nexin-27 (Snx27).